The sequence spans 196 residues: ATP-dependent Clp protease proteolytic subunit (196 aa).

Residue serine 96 is the Nucleophile of the active site. Histidine 121 is an active-site residue.

It belongs to the peptidase S14 family. As to quaternary structure, fourteen ClpP subunits assemble into 2 heptameric rings which stack back to back to give a disk-like structure with a central cavity, resembling the structure of eukaryotic proteasomes.

Its subcellular location is the cytoplasm. It carries out the reaction Hydrolysis of proteins to small peptides in the presence of ATP and magnesium. alpha-casein is the usual test substrate. In the absence of ATP, only oligopeptides shorter than five residues are hydrolyzed (such as succinyl-Leu-Tyr-|-NHMec, and Leu-Tyr-Leu-|-Tyr-Trp, in which cleavage of the -Tyr-|-Leu- and -Tyr-|-Trp bonds also occurs).. Functionally, cleaves peptides in various proteins in a process that requires ATP hydrolysis. Has a chymotrypsin-like activity. Plays a major role in the degradation of misfolded proteins. In Streptococcus pyogenes serotype M3 (strain SSI-1), this protein is ATP-dependent Clp protease proteolytic subunit.